Consider the following 1214-residue polypeptide: RNA-directed RNA polymerase VP1 (1214 aa).

In terms of domain architecture, RdRp catalytic spans 610-805 (APHDVMAPQL…KRTIVGNNVA (196 aa)).

The protein belongs to the reoviridae RNA-directed RNA polymerase family.

The protein resides in the virion. The enzyme catalyses RNA(n) + a ribonucleoside 5'-triphosphate = RNA(n+1) + diphosphate. Its function is as follows. RNA-directed RNA polymerase that is involved in transcription and genome replication. Following infection, it catalyzes the synthesis of fully conservative plus strands. After core assembly, which consists in recruitment of one capped plus-strand for each genomic segments and polymerase complexes, the polymerase switches mode and catalyzes the synthesis of complementary minus-strands. The protein is RNA-directed RNA polymerase VP1 (Segment-1) of Banna virus (BAV).